We begin with the raw amino-acid sequence, 298 residues long: uncharacterized protein (298 aa).

The 61-residue stretch at M1–N61 folds into the HTH lysR-type domain. The segment at residues I21–A40 is a DNA-binding region (H-T-H motif).

Belongs to the LysR transcriptional regulatory family.

This is an uncharacterized protein from Escherichia coli (strain K12).